Reading from the N-terminus, the 213-residue chain is Endoplasmic reticulum vesicle protein 25 (213 aa).

An N-terminal signal peptide occupies residues 1–20 (MILRIPSLLYLFTLLTAVYA). At 21–181 (VKFDLTSDRN…TNESTNQRVK (161 aa)) the chain is on the lumenal side. The GOLD domain occupies 33 to 122 (PKCIWNFASA…VRSVELDVDI (90 aa)). The chain crosses the membrane as a helical span at residues 182–202 (VFSVLIICCTIGLGVWQLLHL). Residues 203–213 (RSFFKRKYLID) are Cytoplasmic-facing.

The protein belongs to the EMP24/GP25L family.

The protein resides in the endoplasmic reticulum membrane. Its subcellular location is the golgi apparatus membrane. In terms of biological role, constituent of COPII-coated endoplasmic reticulum-derived transport vesicles. Required for efficient transport of a subset of secretory proteins to the Golgi. Facilitates retrograde transport from the Golgi to the endoplasmic reticulum. The protein is Endoplasmic reticulum vesicle protein 25 (ERV25) of Cryptococcus neoformans var. neoformans serotype D (strain JEC21 / ATCC MYA-565) (Filobasidiella neoformans).